The primary structure comprises 268 residues: Hydroxyacylglutathione hydrolase (268 aa).

7 residues coordinate Zn(2+): H56, H58, D60, H61, H113, D130, and H168.

It belongs to the metallo-beta-lactamase superfamily. Glyoxalase II family. Monomer. Zn(2+) serves as cofactor.

It catalyses the reaction an S-(2-hydroxyacyl)glutathione + H2O = a 2-hydroxy carboxylate + glutathione + H(+). It functions in the pathway secondary metabolite metabolism; methylglyoxal degradation; (R)-lactate from methylglyoxal: step 2/2. Thiolesterase that catalyzes the hydrolysis of S-D-lactoyl-glutathione to form glutathione and D-lactic acid. This Hydrogenovibrio crunogenus (strain DSM 25203 / XCL-2) (Thiomicrospira crunogena) protein is Hydroxyacylglutathione hydrolase.